We begin with the raw amino-acid sequence, 519 residues long: UPF0053 protein bbp_300 (519 aa).

Transmembrane regions (helical) follow at residues 13 to 35 (LLTLIILEIVLGIDNLVFVAILS), 48 to 70 (LIGLSFALFMRLGLLALMSWMVT), 80 to 102 (YFSFSGRDLILLFGGLFLLFKAT), 123 to 145 (AGFWTIVIQIVILDSIFSLDAII), 150 to 172 (TINNLPIMMIAVVIAMVLMLIAS), 185 to 207 (VVVLCLSFLLMIGCNLVSEALGF), and 212 to 231 (GYLYAAIGFSIIIEIFNQIA). CBS domains follow at residues 311-373 (MTPR…IIDF) and 374-434 (SSTT…DADE).

The protein belongs to the UPF0053 family.

The protein resides in the cell membrane. This is UPF0053 protein bbp_300 from Buchnera aphidicola subsp. Baizongia pistaciae (strain Bp).